A 314-amino-acid chain; its full sequence is tRNA dimethylallyltransferase (314 aa).

Residue 12–19 (GPTASGKT) participates in ATP binding. Substrate is bound at residue 14–19 (TASGKT). Interaction with substrate tRNA stretches follow at residues 37-40 (DSAL) and 162-166 (QRIIR).

The protein belongs to the IPP transferase family. As to quaternary structure, monomer. The cofactor is Mg(2+).

It catalyses the reaction adenosine(37) in tRNA + dimethylallyl diphosphate = N(6)-dimethylallyladenosine(37) in tRNA + diphosphate. Catalyzes the transfer of a dimethylallyl group onto the adenine at position 37 in tRNAs that read codons beginning with uridine, leading to the formation of N6-(dimethylallyl)adenosine (i(6)A). This chain is tRNA dimethylallyltransferase, found in Acinetobacter baumannii (strain SDF).